Consider the following 235-residue polypeptide: (5-formylfuran-3-yl)methyl phosphate synthase (235 aa).

The active-site Schiff-base intermediate with substrate is Lys-27. Catalysis depends on Lys-85, which acts as the Proton acceptor.

Belongs to the MfnB family.

It catalyses the reaction 2 D-glyceraldehyde 3-phosphate = 4-(hydroxymethyl)-2-furancarboxaldehyde phosphate + phosphate + 2 H2O. Its pathway is cofactor biosynthesis; methanofuran biosynthesis. Its function is as follows. Catalyzes the formation of 4-(hydroxymethyl)-2-furancarboxaldehyde phosphate (4-HFC-P) from two molecules of glyceraldehyde-3-P (GA-3-P). This Methanococcus aeolicus (strain ATCC BAA-1280 / DSM 17508 / OCM 812 / Nankai-3) protein is (5-formylfuran-3-yl)methyl phosphate synthase.